The chain runs to 184 residues: Large ribosomal subunit protein eL13 (184 aa).

Residues 28 to 53 (PARKERRRQARKAKAQRIAPRPASGP) form a disordered region. Positions 31–42 (KERRRQARKAKA) are enriched in basic residues.

This sequence belongs to the eukaryotic ribosomal protein eL13 family.

In Schistosoma mansoni (Blood fluke), this protein is Large ribosomal subunit protein eL13 (RPL13).